The following is a 251-amino-acid chain: Zinc import ATP-binding protein ZnuC (251 aa).

Positions 5–220 (VSLENVSVSF…PEFISMFGPR (216 aa)) constitute an ABC transporter domain. Residue 37 to 44 (GPNGAGKS) participates in ATP binding.

This sequence belongs to the ABC transporter superfamily. Zinc importer (TC 3.A.1.15.5) family. As to quaternary structure, the complex is composed of two ATP-binding proteins (ZnuC), two transmembrane proteins (ZnuB) and a solute-binding protein (ZnuA).

Its subcellular location is the cell inner membrane. The enzyme catalyses Zn(2+)(out) + ATP(in) + H2O(in) = Zn(2+)(in) + ADP(in) + phosphate(in) + H(+)(in). In terms of biological role, part of the ABC transporter complex ZnuABC involved in zinc import. Responsible for energy coupling to the transport system. In Shigella flexneri serotype 5b (strain 8401), this protein is Zinc import ATP-binding protein ZnuC.